Reading from the N-terminus, the 161-residue chain is RNA pyrophosphohydrolase (161 aa).

The 143-residue stretch at Pro12–Lys154 folds into the Nudix hydrolase domain. The short motif at Gly46–Gly67 is the Nudix box element.

This sequence belongs to the Nudix hydrolase family. RppH subfamily. A divalent metal cation is required as a cofactor.

In terms of biological role, accelerates the degradation of transcripts by removing pyrophosphate from the 5'-end of triphosphorylated RNA, leading to a more labile monophosphorylated state that can stimulate subsequent ribonuclease cleavage. This chain is RNA pyrophosphohydrolase, found in Rickettsia rickettsii (strain Iowa).